The primary structure comprises 170 residues: Translocator protein 2 (170 aa).

5 helical membrane passes run 3–23 (LQGA…WLFT), 45–65 (VLLL…YLVW), 78–98 (LPLG…VLFF), 104–124 (GLAL…ALIW), and 130–150 (LAAL…ALTY).

The protein belongs to the TspO/BZRP family. Homotetramer. May also form homodimer. In terms of tissue distribution, expressed in erythrocytes (at protein level).

The protein resides in the endoplasmic reticulum membrane. Its subcellular location is the cell membrane. In terms of biological role, cholesterol-binding protein involved in the redistribution of cholesterol from lipid droplets to the endoplasmic reticulum. Required to meet cholesterol demands during erythropoietic differentiation. May play a role in transport processes at the plasma membrane of erythrocytes, including regulating VDAC-mediated ATP export, and import of the heme precursors protoporphyrin IX and 5-aminolevulinic acid. The polypeptide is Translocator protein 2 (TSPO2) (Homo sapiens (Human)).